Reading from the N-terminus, the 521-residue chain is Probable cytochrome P450 12d1 distal, mitochondrial (521 aa).

The N-terminal 19 residues, 1-19 (MNTLSSARSVAIYVGPVRS), are a transit peptide targeting the mitochondrion. A heme-binding site is contributed by Cys-467.

This sequence belongs to the cytochrome P450 family. It depends on heme as a cofactor.

The protein localises to the mitochondrion membrane. The polypeptide is Probable cytochrome P450 12d1 distal, mitochondrial (Drosophila melanogaster (Fruit fly)).